Consider the following 26-residue polypeptide: uncharacterized protein (26 aa).

The span at 1 to 16 shows a compositional bias: polar residues; sequence MPEQKANCSPNGNITV. The interval 1-26 is disordered; the sequence is MPEQKANCSPNGNITVDSMIMSLGSS.

This is an uncharacterized protein from Saccharomyces cerevisiae (strain ATCC 204508 / S288c) (Baker's yeast).